We begin with the raw amino-acid sequence, 354 residues long: Peptide chain release factor 1 (354 aa).

N5-methylglutamine is present on glutamine 230.

The protein belongs to the prokaryotic/mitochondrial release factor family. In terms of processing, methylated by PrmC. Methylation increases the termination efficiency of RF1.

The protein resides in the cytoplasm. Peptide chain release factor 1 directs the termination of translation in response to the peptide chain termination codons UAG and UAA. The polypeptide is Peptide chain release factor 1 (Leptospira interrogans serogroup Icterohaemorrhagiae serovar copenhageni (strain Fiocruz L1-130)).